Here is an 84-residue protein sequence, read N- to C-terminus: Seminal ribonuclease (84 aa).

3 disulfide bridges follow: Cys10–Cys65, Cys28–Cys80, and Cys35–Cys42. Residues 11–15, Lys36, and Arg55 each bind substrate; that span reads KPVNT.

This sequence belongs to the pancreatic ribonuclease family. As to quaternary structure, homodimer; disulfide-linked.

It is found in the secreted. The catalysed reaction is an [RNA] containing cytidine + H2O = an [RNA]-3'-cytidine-3'-phosphate + a 5'-hydroxy-ribonucleotide-3'-[RNA].. The enzyme catalyses an [RNA] containing uridine + H2O = an [RNA]-3'-uridine-3'-phosphate + a 5'-hydroxy-ribonucleotide-3'-[RNA].. The sequence is that of Seminal ribonuclease (SRN) from Giraffa camelopardalis (Giraffe).